The sequence spans 66 residues: MAKSKDVRVAVILECTSCVRNGVNKVSTGISRYITQKNRHNTPNPLELKKFCPYCYKHTIHGEIKK.

This sequence belongs to the bacterial ribosomal protein bL33 family.

It is found in the plastid. Its subcellular location is the chloroplast. This Ipomoea purpurea (Common morning glory) protein is Large ribosomal subunit protein bL33c.